We begin with the raw amino-acid sequence, 467 residues long: MTEVFTIKQCLDGEISIDETVTVRGWVKTRRDSKAGLSFISLHDGSCFSPIQIVATDQLSNYHKEVTKLTAGCSMIATGKLVASQGKGQFFEIQAESIEVVGWVENPDTYPIQAKRHTLEFLREVAHLRPRTNTISAVTRVRHSLAQAIHRFYHEQGFFWVHTPIITASDCEGAGEMFRVSTLDLLNIPKNDKGQIDFSKDFFGRETFLTVSGQLNVEAYCMAMSKVYTFGPTFRAENSNTSRHLAEFWMIEPEIAFANLEDICKLSQSMLRYLCKTVLEERADDMDFFNQFVAPGCIERMEHIADSEFEIMTYTDAVKALEASDQKFEFPVSWGLDLQSEHERYLAEVLCKKPVIVTNYPQEIKGFYMRLNDDGKTVAAMDVLAPGIGEIIGGSQREERLEILDRRMDECNLNKEHYQWYRDLRRYGTVPHAGFGLGFERLISYVTGVSNVRDVIPFPRTPGHADY.

Belongs to the class-II aminoacyl-tRNA synthetase family. In terms of assembly, homodimer.

It is found in the cytoplasm. The catalysed reaction is tRNA(Asn) + L-asparagine + ATP = L-asparaginyl-tRNA(Asn) + AMP + diphosphate + H(+). The polypeptide is Asparagine--tRNA ligase (Legionella pneumophila (strain Paris)).